The following is a 397-amino-acid chain: tRNA(Ile)-lysidine synthase (397 aa).

44–49 provides a ligand contact to ATP; it reads SGGADS.

It belongs to the tRNA(Ile)-lysidine synthase family.

The protein resides in the cytoplasm. It carries out the reaction cytidine(34) in tRNA(Ile2) + L-lysine + ATP = lysidine(34) in tRNA(Ile2) + AMP + diphosphate + H(+). Its function is as follows. Ligates lysine onto the cytidine present at position 34 of the AUA codon-specific tRNA(Ile) that contains the anticodon CAU, in an ATP-dependent manner. Cytidine is converted to lysidine, thus changing the amino acid specificity of the tRNA from methionine to isoleucine. The sequence is that of tRNA(Ile)-lysidine synthase from Rhodopirellula baltica (strain DSM 10527 / NCIMB 13988 / SH1).